The following is a 481-amino-acid chain: Proline--tRNA ligase (481 aa).

It belongs to the class-II aminoacyl-tRNA synthetase family. ProS type 3 subfamily. As to quaternary structure, homodimer.

The protein resides in the cytoplasm. It catalyses the reaction tRNA(Pro) + L-proline + ATP = L-prolyl-tRNA(Pro) + AMP + diphosphate. In terms of biological role, catalyzes the attachment of proline to tRNA(Pro) in a two-step reaction: proline is first activated by ATP to form Pro-AMP and then transferred to the acceptor end of tRNA(Pro). In Chlorobaculum tepidum (strain ATCC 49652 / DSM 12025 / NBRC 103806 / TLS) (Chlorobium tepidum), this protein is Proline--tRNA ligase.